The following is a 262-amino-acid chain: Cyclin-dependent kinase inhibitor 1 (262 aa).

The interval 140-212 (SDVAEAGSEH…SAQQATRPKI (73 aa)) is disordered. The span at 160 to 169 (SGRDRERRET) shows a compositional bias: basic and acidic residues. Positions 198–208 (SAATASAQQAT) are enriched in low complexity.

This sequence belongs to the CDI family. ICK/KRP subfamily. In terms of tissue distribution, expressed in roots, stems, leaves and apex.

Functionally, regulates the production of endosperm cells, affecting seed filling and embryo development. Regulates endoreduplication of endosperm cells. May play a role in the exit from the mitotic cell cycle during rice grain formation. Inhibitis leaf elongation rates by decreasing cell number, that is partly compensated by increased cell size. May not affect growth rate or cell size of the primary root. The sequence is that of Cyclin-dependent kinase inhibitor 1 (KRP1) from Oryza sativa subsp. japonica (Rice).